A 363-amino-acid polypeptide reads, in one-letter code: Probable endopolygalacturonase A (363 aa).

Residues Met-1 to Ala-20 form the signal peptide. A propeptide spanning residues Ala-21 to Arg-28 is cleaved from the precursor. A disulfide bridge links Cys-31 with Cys-46. PbH1 repeat units follow at residues Ser-158–Ser-187, Ser-188–Ser-209, Gly-210–Ser-230, Val-239–Thr-260, Val-268–Gln-290, and Thr-302–Gly-347. Asn-162 carries N-linked (GlcNAc...) asparagine glycosylation. Residue Asp-202 is the Proton donor of the active site. Cys-204 and Cys-220 are disulfide-bonded. His-224 is a catalytic residue. Disulfide bonds link Cys-330-Cys-335 and Cys-354-Cys-363.

This sequence belongs to the glycosyl hydrolase 28 family.

It localises to the secreted. The catalysed reaction is (1,4-alpha-D-galacturonosyl)n+m + H2O = (1,4-alpha-D-galacturonosyl)n + (1,4-alpha-D-galacturonosyl)m.. In terms of biological role, involved in maceration and soft-rotting of plant tissue. Hydrolyzes the 1,4-alpha glycosidic bonds of de-esterified pectate in the smooth region of the plant cell wall. This is Probable endopolygalacturonase A (pgaA) from Aspergillus parasiticus.